Consider the following 176-residue polypeptide: Disulfide bond formation protein B (176 aa).

The Cytoplasmic portion of the chain corresponds to 1–11 (MLQLTTYRNLQ). Residues 12-28 (VFLVIMTAIGMSFALFF) form a helical membrane-spanning segment. The Periplasmic portion of the chain corresponds to 29 to 46 (LQRYMGFSPCPLCIFQRI). A disulfide bridge links Cys38 with Cys41. A helical transmembrane segment spans residues 47 to 63 (GLMIMGGFALIAALFHP). Residues 64–70 (KSMVIRL) are Cytoplasmic-facing. The chain crosses the membrane as a helical span at residues 71-88 (LLWLGSLAGIGWAAIVAG). Residues 89–145 (RHVWLQHLPADQVPSCGPGLDYWLDTLPMQQVLKEVFAGSGECASIEWTFLGLSIPE) lie on the Periplasmic side of the membrane. Residues Cys104 and Cys131 are joined by a disulfide bond. The chain crosses the membrane as a helical span at residues 146-164 (QSLILFSILILTHLLILWR). Residues 165-176 (IVRPSTPKPLAR) are Cytoplasmic-facing.

It belongs to the DsbB family.

The protein localises to the cell inner membrane. In terms of biological role, required for disulfide bond formation in some periplasmic proteins. Acts by oxidizing the DsbA protein. The chain is Disulfide bond formation protein B from Psychrobacter arcticus (strain DSM 17307 / VKM B-2377 / 273-4).